A 475-amino-acid polypeptide reads, in one-letter code: MSSNNGDVRLWGARFADGPAEALAKLSASVHFDWRLAPYDIAGSRAHARVLSKAGLLSEDELTRMLAGLDQLEADVADGSFTGTIADEDVHTALERGLLERLGADLGGKLRAGRSRNDQIATLFRMYLRDHARTIGGLIADLQSALVGLAEAHADVAMPGRTHLQHAQPVLFAHHVLAHVQSLSRDAERLRQWDERTAVSPYGSGALAGSSLGLDPQAVAADLGFERGSVANSIDGTASRDFVAEFAFITAMIGVNLSRIAEEVIIWNTKEFSFVTLHDAFSTGSSIMPQKKNPDIAELARGKSGRLIGNLTGLLATLKALPLAYNRDLQEDKEPVFDSCDQLEVLLPAFTGMMATLTVNRERMEELAPAGFSLATDIAEWLVKQGVPFRVAHEVAGACVKECERAGIELDQLTDEQFAEISEHLTPEVRTVLNVRGALASRDGRGGTAPSAVAVQLAEVKEDLAAQHAWATARP.

This sequence belongs to the lyase 1 family. Argininosuccinate lyase subfamily.

It is found in the cytoplasm. The catalysed reaction is 2-(N(omega)-L-arginino)succinate = fumarate + L-arginine. It participates in amino-acid biosynthesis; L-arginine biosynthesis; L-arginine from L-ornithine and carbamoyl phosphate: step 3/3. The protein is Argininosuccinate lyase of Streptomyces griseus subsp. griseus (strain JCM 4626 / CBS 651.72 / NBRC 13350 / KCC S-0626 / ISP 5235).